The chain runs to 222 residues: GTP cyclohydrolase 1 (222 aa).

3 residues coordinate Zn(2+): Cys-111, His-114, and Cys-182.

The protein belongs to the GTP cyclohydrolase I family. Homomer.

The enzyme catalyses GTP + H2O = 7,8-dihydroneopterin 3'-triphosphate + formate + H(+). Its pathway is cofactor biosynthesis; 7,8-dihydroneopterin triphosphate biosynthesis; 7,8-dihydroneopterin triphosphate from GTP: step 1/1. This is GTP cyclohydrolase 1 from Klebsiella pneumoniae (strain 342).